The following is a 337-amino-acid chain: Cytochrome P450 monooxygenase dpmpJ (337 aa).

A helical membrane pass occupies residues 4–24; sequence LILHHPYASLAAGILLYFFCL. N158 carries N-linked (GlcNAc...) asparagine glycosylation.

Belongs to the cytochrome P450 family. It depends on heme as a cofactor.

The protein resides in the membrane. Its pathway is secondary metabolite biosynthesis; terpenoid biosynthesis. Cytochrome P450 monooxygenase; part of the gene cluster that mediates the biosynthesis of diterpenoid pyrones. The first step of the pathway is the synthesis of the alpha-pyrone moiety by the polyketide synthase dpmpA via condensation of one acetyl-CoA starter unit with 3 malonyl-CoA units and 2 methylations. The alpha-pyrone is then combined with geranylgeranyl pyrophosphate (GGPP) formed by the GGPP synthase dpmpD through the action of the prenyltransferase dpmpC to yield a linear alpha-pyrone diterpenoid. Subsequent steps in the diterpenoid pyrone biosynthetic pathway involve the decalin core formation, which is initiated by the epoxidation of the C10-C11 olefin by the FAD-dependent oxidoreductase dpmpE, and is followed by a cyclization cascade catalyzed by the terpene cyclase dpmpB. The short chain dehydrogenase/reductase dpmpG then oxidizes the 8S hydroxy group to a ketone and the short chain dehydrogenase/reductase dpmpH reduces the ketone to the 8R hydroxy group to yield higginsianin B. Higginsianin B is further methylated by the methyltransferase dpmpI to produce the intermediate named FDDP B. The cytochrome P450 monooxygenase dpmpJ then oxidizes the C-26 methyl to primary alcohol, producing the final diterpenoid pyrone with a C-26 primary alcohol on the gamma-pyrone moiety named FDDP C. In Macrophomina phaseolina (strain MS6) (Charcoal rot fungus), this protein is Cytochrome P450 monooxygenase dpmpJ.